We begin with the raw amino-acid sequence, 149 residues long: Aquaporin-like protein 2 (149 aa).

The segment at 1 to 35 (MSNESNDLEKNISHLDPTGVDNAYIPPEQPETKHS) is disordered. Over 1–47 (MSNESNDLEKNISHLDPTGVDNAYIPPEQPETKHSRFNIDRDTLRNH) the chain is Cytoplasmic. Residues 48–68 (FIAAVGEFCGTFMFLWCAYVI) traverse the membrane as a helical segment. Residues 69 to 89 (CNVANHDVALTTEPEGSHPGQ) lie on the Extracellular side of the membrane. A helical membrane pass occupies residues 90–110 (LIMIALGFGFSVMFSIWCFWW). Residues 111–149 (GFEPSRFSLFVFGQSHLTSQMCSDVVSSDHCWDGCWWCR) lie on the Cytoplasmic side of the membrane.

Belongs to the MIP/aquaporin (TC 1.A.8) family.

Its subcellular location is the endoplasmic reticulum membrane. It is found in the cell membrane. Water channel required to facilitate the transport of water across membranes. Involved in freeze tolerance, osmotolerance and cell flocculation in liquid cultures. Is non-functional in most laboratory strains. This is Aquaporin-like protein 2 (AQY2-2) from Saccharomyces cerevisiae (strain JAY291) (Baker's yeast).